Here is a 432-residue protein sequence, read N- to C-terminus: Tryptophan--tRNA ligase (432 aa).

ATP-binding positions include 13 to 15 (TTS) and 21 to 22 (GN). Positions 14–22 (TSGTPHLGN) match the 'HIGH' region motif. L-tryptophan is bound at residue D146. Residues 158–160 (GRD), L198, and 205–209 (KMSKS) each bind ATP. Positions 205–209 (KMSKS) match the 'KMSKS' region motif.

Belongs to the class-I aminoacyl-tRNA synthetase family. In terms of assembly, homodimer.

It is found in the cytoplasm. It carries out the reaction tRNA(Trp) + L-tryptophan + ATP = L-tryptophyl-tRNA(Trp) + AMP + diphosphate + H(+). Catalyzes the attachment of tryptophan to tRNA(Trp). The chain is Tryptophan--tRNA ligase from Xanthomonas axonopodis pv. citri (strain 306).